A 280-amino-acid polypeptide reads, in one-letter code: DCN1-like protein 4 (280 aa).

The segment at 37–71 is disordered; that stretch reads GPESHGTACCSRAMPPRKKRRPTAGDDLSAKKSRQ. Residues 89–275 form the DCUN1 domain; that stretch reads FSSKRCLEWF…LLDEFVEWYK (187 aa).

As to quaternary structure, may interact (via the DCUN1 domain) with unneddylated cullins.

The protein localises to the nucleus. Its function is as follows. Contributes to the neddylation of all cullins by transferring NEDD8 from N-terminally acetylated NEDD8-conjugating E2s enzyme to different cullin C-terminal domain-RBX complexes. The sequence is that of DCN1-like protein 4 from Danio rerio (Zebrafish).